A 334-amino-acid chain; its full sequence is Protein-glutamate methylesterase FrzG (334 aa).

In terms of domain architecture, CheB-type methylesterase spans 147 to 334 (PYPLVAIAAS…AALMQWVDVC (188 aa)). Residues serine 156, histidine 183, and aspartate 276 contribute to the active site.

It catalyses the reaction [protein]-L-glutamate 5-O-methyl ester + H2O = L-glutamyl-[protein] + methanol + H(+). Functionally, probable methylesterase. Required for the normal aggregation of M.xanthus cells during fruiting body formation. It is also a component of a sensory transduction pathway that controls the frequency at which cells reverse their gliding direction. It may remove the methyl group from the gamma-glutamyl methyl ester residues in FrzCD. The sequence is that of Protein-glutamate methylesterase FrzG (frzG) from Myxococcus xanthus.